The chain runs to 282 residues: Peptidoglycan-recognition protein LD (282 aa).

The disordered stretch occupies residues 1-29 (MDSSHIAVRVARRSPSPAAVSQSSYGSLG). Residues 1–88 (MDSSHIAVRV…RRNPTLHEDC (88 aa)) lie on the Cytoplasmic side of the membrane. The chain crosses the membrane as a helical span at residues 89–111 (FNWRSVGLLVMCASALALAAYLL). The Extracellular segment spans residues 112–282 (WRQTQTPDFG…PHYASHQTSK (171 aa)). The cysteines at positions 162 and 166 are disulfide-linked. The N-linked (GlcNAc...) asparagine glycan is linked to Asn222.

The protein belongs to the N-acetylmuramoyl-L-alanine amidase 2 family. As to expression, expressed in uninduced hemocytes and mbn-2 cells.

Its subcellular location is the cell membrane. Its function is as follows. Peptidoglycan-recognition protein probably involved in innate immunity by binding to peptidoglycans (PGN) of bacteria and activating the immune response. This chain is Peptidoglycan-recognition protein LD (PGRP-LD), found in Drosophila melanogaster (Fruit fly).